A 417-amino-acid polypeptide reads, in one-letter code: 4-hydroxy-3-methylbut-2-en-1-yl diphosphate synthase (flavodoxin) (417 aa).

[4Fe-4S] cluster-binding residues include C304, C307, C350, and E357.

This sequence belongs to the IspG family. [4Fe-4S] cluster serves as cofactor.

It catalyses the reaction (2E)-4-hydroxy-3-methylbut-2-enyl diphosphate + oxidized [flavodoxin] + H2O + 2 H(+) = 2-C-methyl-D-erythritol 2,4-cyclic diphosphate + reduced [flavodoxin]. It participates in isoprenoid biosynthesis; isopentenyl diphosphate biosynthesis via DXP pathway; isopentenyl diphosphate from 1-deoxy-D-xylulose 5-phosphate: step 5/6. Its function is as follows. Converts 2C-methyl-D-erythritol 2,4-cyclodiphosphate (ME-2,4cPP) into 1-hydroxy-2-methyl-2-(E)-butenyl 4-diphosphate. The chain is 4-hydroxy-3-methylbut-2-en-1-yl diphosphate synthase (flavodoxin) from Rhizobium rhizogenes (strain K84 / ATCC BAA-868) (Agrobacterium radiobacter).